The following is an 843-amino-acid chain: Complement component C7 (843 aa).

An N-terminal signal peptide occupies residues methionine 1 to alanine 22. In terms of domain architecture, TSP type-1 1 spans asparagine 27–proline 80. Disulfide bonds link cysteine 28–cysteine 63, cysteine 39–cysteine 73, cysteine 42–cysteine 79, cysteine 85–cysteine 96, cysteine 91–cysteine 109, cysteine 103–cysteine 119, and cysteine 128–cysteine 165. Tryptophan 36 carries a C-linked (Man) tryptophan glycan. The LDL-receptor class A domain maps to glutamate 83–aspartate 121. Residues aspartate 108–glutamate 120 are compositionally biased toward acidic residues. The interval aspartate 108–glycine 143 is disordered. A compositionally biased stretch (basic and acidic residues) spans aspartate 121–lysine 132. One can recognise an MACPF domain in the interval arginine 124–histidine 456. Asparagine 202 carries N-linked (GlcNAc...) asparagine glycosylation. The tract at residues serine 219–asparagine 240 is disordered. Low complexity predominate over residues phenylalanine 225–serine 234. 12 cysteine pairs are disulfide-bonded: cysteine 337/cysteine 353, cysteine 433/cysteine 560, cysteine 455/cysteine 505, cysteine 457/cysteine 473, cysteine 460/cysteine 475, cysteine 477/cysteine 486, cysteine 512/cysteine 545, cysteine 523/cysteine 535, cysteine 571/cysteine 613, cysteine 599/cysteine 626, cysteine 631/cysteine 673, and cysteine 659/cysteine 688. Residues cysteine 457–glutamate 487 enclose the EGF-like domain. One can recognise a TSP type-1 2 domain in the interval aspartate 500–glutamate 549. Residues tryptophan 503, tryptophan 506, and tryptophan 509 are each glycosylated (C-linked (Man) tryptophan; partial). The tract at residues lysine 516–glutamate 538 is disordered. CCP regions lie at residues cysteine 545–glutamate 615 and aspartate 616–asparagine 693. 2 consecutive Sushi domains span residues glutamate 569–lysine 628 and isoleucine 629–glutamine 690. Factor I module (FIM) regions lie at residues leucine 695–glutamate 770 and lysine 771–glutamine 843. O-linked (GalNAc...) threonine glycosylation occurs at threonine 696. 9 disulfides stabilise this stretch: cysteine 702-cysteine 713, cysteine 715-cysteine 750, cysteine 721-cysteine 743, cysteine 728-cysteine 763, cysteine 773-cysteine 782, cysteine 776-cysteine 789, cysteine 791-cysteine 825, cysteine 797-cysteine 818, and cysteine 805-cysteine 838. N-linked (GlcNAc...) (complex) asparagine glycosylation occurs at asparagine 754.

The protein belongs to the complement C6/C7/C8/C9 family. In terms of assembly, monomer or dimer; as a C5b-7 complex it can also form multimeric rosettes. Component of the membrane attack complex (MAC), composed of complement C5b, C6, C7, C8A, C8B, C8G and multiple copies of the pore-forming subunit C9. In terms of processing, C-, N- and O-glycosylated. O-glycosylated with core 1 or possibly core 8 glycans.

The protein resides in the secreted. Its subcellular location is the target cell membrane. With respect to regulation, membrane attack complex (MAC) assembly is inhibited by CD59, thereby protecting self-cells from damage during complement activation. MAC assembly is also inhibited by clusterin (CLU) chaperones that inhibit polymerization of C9. Its function is as follows. Component of the membrane attack complex (MAC), a multiprotein complex activated by the complement cascade, which inserts into a target cell membrane and forms a pore, leading to target cell membrane rupture and cell lysis. The MAC is initiated by proteolytic cleavage of C5 into complement C5b in response to the classical, alternative, lectin and GZMK complement pathways. The complement pathways consist in a cascade of proteins that leads to phagocytosis and breakdown of pathogens and signaling that strengthens the adaptive immune system. C7 serves as a membrane anchor. During MAC assembly, associates with C5b and C6 to form the C5b-7 complex, a key lipophilic precursor of the MAC complex, which associates with the outer leaflet and reduces the energy for membrane bending. The chain is Complement component C7 from Homo sapiens (Human).